The following is a 450-amino-acid chain: UDP-N-acetylmuramoylalanine--D-glutamate ligase (450 aa).

Gly119 to Thr125 serves as a coordination point for ATP.

Belongs to the MurCDEF family.

Its subcellular location is the cytoplasm. The enzyme catalyses UDP-N-acetyl-alpha-D-muramoyl-L-alanine + D-glutamate + ATP = UDP-N-acetyl-alpha-D-muramoyl-L-alanyl-D-glutamate + ADP + phosphate + H(+). The protein operates within cell wall biogenesis; peptidoglycan biosynthesis. Cell wall formation. Catalyzes the addition of glutamate to the nucleotide precursor UDP-N-acetylmuramoyl-L-alanine (UMA). The chain is UDP-N-acetylmuramoylalanine--D-glutamate ligase from Streptococcus thermophilus (strain CNRZ 1066).